We begin with the raw amino-acid sequence, 201 residues long: Molybdenum cofactor guanylyltransferase (201 aa).

GTP contacts are provided by residues 15–17 (LCG), Lys28, Asp74, and Asp104. Residue Asp104 coordinates Mg(2+).

It belongs to the MobA family. In terms of assembly, monomer. The cofactor is Mg(2+).

The protein localises to the cytoplasm. It catalyses the reaction Mo-molybdopterin + GTP + H(+) = Mo-molybdopterin guanine dinucleotide + diphosphate. Transfers a GMP moiety from GTP to Mo-molybdopterin (Mo-MPT) cofactor (Moco or molybdenum cofactor) to form Mo-molybdopterin guanine dinucleotide (Mo-MGD) cofactor. This chain is Molybdenum cofactor guanylyltransferase, found in Ectopseudomonas mendocina (strain ymp) (Pseudomonas mendocina).